The sequence spans 157 residues: Probable succinate transporter subunit YjjB (157 aa).

4 helical membrane passes run 6–26 (FFMALMQDMILSAIPAVGFAM), 55–75 (AGFNIEWSTFMASLLVGSIGI), 87–107 (VFTVAAVIPMFPGISAYTAMI), and 129–149 (FLKASSIVGALSIGLSVPGLW).

It belongs to the ThrE exporter (TC 2.A.79) family. The transporter is composed of YjjB and YjjP.

It localises to the cell inner membrane. Its function is as follows. Involved in succinate export with YjjP. Both proteins are required for export. The polypeptide is Probable succinate transporter subunit YjjB (Salmonella arizonae (strain ATCC BAA-731 / CDC346-86 / RSK2980)).